Reading from the N-terminus, the 430-residue chain is Enolase (430 aa).

A (2R)-2-phosphoglycerate-binding site is contributed by Gln-165. Glu-207 acts as the Proton donor in catalysis. Asp-244, Glu-287, and Asp-314 together coordinate Mg(2+). (2R)-2-phosphoglycerate contacts are provided by Lys-339, Arg-368, Ser-369, and Lys-390. Lys-339 functions as the Proton acceptor in the catalytic mechanism.

The protein belongs to the enolase family. In terms of assembly, component of the RNA degradosome, a multiprotein complex involved in RNA processing and mRNA degradation. Mg(2+) serves as cofactor.

The protein localises to the cytoplasm. It localises to the secreted. It is found in the cell surface. The catalysed reaction is (2R)-2-phosphoglycerate = phosphoenolpyruvate + H2O. Its pathway is carbohydrate degradation; glycolysis; pyruvate from D-glyceraldehyde 3-phosphate: step 4/5. Catalyzes the reversible conversion of 2-phosphoglycerate (2-PG) into phosphoenolpyruvate (PEP). It is essential for the degradation of carbohydrates via glycolysis. The sequence is that of Enolase from Xylella fastidiosa (strain 9a5c).